Here is a 354-residue protein sequence, read N- to C-terminus: uncharacterized protein (354 aa).

Positions 48–285 constitute an ABC transporter domain; the sequence is VETWEISKIY…DEGYEVVLKG (238 aa). Residue 87–94 participates in ATP binding; the sequence is GPNGAGKT.

Belongs to the ABC transporter superfamily.

This is an uncharacterized protein from Synechocystis sp. (strain ATCC 27184 / PCC 6803 / Kazusa).